A 147-amino-acid polypeptide reads, in one-letter code: Large ribosomal subunit protein uL13 (147 aa).

This sequence belongs to the universal ribosomal protein uL13 family. As to quaternary structure, part of the 50S ribosomal subunit.

This protein is one of the early assembly proteins of the 50S ribosomal subunit, although it is not seen to bind rRNA by itself. It is important during the early stages of 50S assembly. The sequence is that of Large ribosomal subunit protein uL13 from Micrococcus luteus (strain ATCC 4698 / DSM 20030 / JCM 1464 / CCM 169 / CCUG 5858 / IAM 1056 / NBRC 3333 / NCIMB 9278 / NCTC 2665 / VKM Ac-2230) (Micrococcus lysodeikticus).